The following is a 356-amino-acid chain: D-alanine--D-alanine ligase (356 aa).

Residues K134–N339 form the ATP-grasp domain. Position 167 to 222 (E167 to E222) interacts with ATP. 3 residues coordinate Mg(2+): D293, E306, and N308.

It belongs to the D-alanine--D-alanine ligase family. Requires Mg(2+) as cofactor. It depends on Mn(2+) as a cofactor.

It localises to the cytoplasm. It carries out the reaction 2 D-alanine + ATP = D-alanyl-D-alanine + ADP + phosphate + H(+). It functions in the pathway cell wall biogenesis; peptidoglycan biosynthesis. Its function is as follows. Cell wall formation. This is D-alanine--D-alanine ligase from Macrococcus caseolyticus (strain JCSC5402) (Macrococcoides caseolyticum).